Reading from the N-terminus, the 110-residue chain is Quaternary ammonium compound-resistance protein QacE (110 aa).

A run of 4 helical transmembrane segments spans residues 1–21 (MKGW…TSAL), 30–50 (LAPS…LSLV), 58–78 (VAYA…AWLL), and 85–105 (AWGF…NLLS).

The protein belongs to the drug/metabolite transporter (DMT) superfamily. Small multidrug resistance (SMR) (TC 2.A.7.1) family.

The protein resides in the cell membrane. Its function is as follows. Multidrug exporter. Is implicated for the resistance to bacteriocidal quaternary ammonium compounds. In Escherichia coli, this protein is Quaternary ammonium compound-resistance protein QacE (qacE).